Reading from the N-terminus, the 269-residue chain is Phosphonoacetaldehyde hydrolase (269 aa).

Asp9 serves as the catalytic Nucleophile. 2 residues coordinate Mg(2+): Asp9 and Ala11. Residue Lys50 is the Schiff-base intermediate with substrate of the active site. Asp184 contacts Mg(2+).

This sequence belongs to the HAD-like hydrolase superfamily. PhnX family. As to quaternary structure, homodimer. The cofactor is Mg(2+).

It catalyses the reaction phosphonoacetaldehyde + H2O = acetaldehyde + phosphate + H(+). Involved in phosphonate degradation. This is Phosphonoacetaldehyde hydrolase from Lysinibacillus sphaericus (strain C3-41).